The primary structure comprises 1744 residues: Complement C4-B (1744 aa).

A signal peptide spans 1–19; that stretch reads MRLLWGLIWASSFFTLSLQ. C68 and C97 form a disulfide bridge. N-linked (GlcNAc...) asparagine glycosylation is present at N226. An intrachain disulfide couples C635 to C669. Residues 676–679 constitute a propeptide that is removed on maturation; the sequence is RKKR. 3 disulfide bridges follow: C702/C728, C703/C735, and C716/C736. The region spanning 702-736 is the Anaphylatoxin-like domain; that stretch reads CCQDGVTRLPMMRSCEQRAARVQQPDCREPFLSCC. An N-linked (GlcNAc...) asparagine glycan is attached at N862. Phosphoserine is present on S918. Positions 1010 to 1013 form a cross-link, isoglutamyl cysteine thioester (Cys-Gln); that stretch reads CGEQ. N-linked (GlcNAc...) asparagine glycosylation is found at N1328 and N1391. Y1417, Y1420, and Y1422 each carry sulfotyrosine. Positions 1447–1453 are excised as a propeptide; sequence RRNRRRR. 5 disulfide bridges follow: C1471/C1535, C1583/C1588, C1595/C1673, C1618/C1742, and C1718/C1727. The 148-residue stretch at 1595 to 1742 folds into the NTR domain; that stretch reads CPRQRRALER…FLQEYGTQGC (148 aa).

In terms of assembly, in absence of complement activation, circulates in blood as a disulfide-linked trimer of an alpha, beta and gamma chain. Complement C4b is composed of complement C4b-A, complement C4 beta and complement C4 gamma chains that are associated via disulfide bonds. Non-enzymatic component of the C3 convertase, also named C4bC2b, composed of the serine protease complement C2b (C2), as well as complement C4b. Non-enzymatic component of the C5 convertase, also named C4bC2bC3b, composed of the serine protease complement C2b (C2), complement C3b, as well as complement C4b. Interacts with CR1 (via Sushi 1 and Sushi 2 domains). As to quaternary structure, (Microbial infection) Binds B.burgdorferi OspC, the interaction is inhibited by complement factor C2. This binding may inhibit the complement cascade and allow the bacteria to survive in the host bloodstream. Prior to secretion, the single-chain precursor is enzymatically cleaved by plasminogen (PLG) to yield non-identical chains alpha, beta and gamma. During activation of the complement systems, the alpha chain is cleaved into C4a and C4b by different proteases depending on the complement pathway: C4b stays linked to the beta and gamma chains, while C4a is released in the plasma. The alpha chain is cleaved by C1S to generate C4a and C4b following activation by the classical complement system. The alpha chain is cleaved to generate C4a and C4b by MASP2 following activation by the lectin complement system. The alpha chain is cleaved by GZMK to generate C4a and C4b following activation by the GZMK complement system. Further degradation of C4b by C1 into the inactive fragments C4c and C4d blocks the generation of C3 convertase. The proteolytic cleavages often are incomplete so that many structural forms can be found in plasma. In terms of processing, upon activation, the internal thioester bond reacts with carbohydrate antigens on the target surface to form amide or ester bonds, leading to covalent association with the surface of pathogens. Post-translationally, complement C4b interacts with complement C3b via a thioester linkage. N- and O-glycosylated. O-glycosylated with a core 1 or possibly core 8 glycan. Complement component C4 is expressed at highest levels in the liver, at moderate levels in the adrenal cortex, adrenal medulla, thyroid gland, and the kidney, and at lowest levels in the heart, ovary, small intestine, thymus, pancreas and spleen. The extra-hepatic sites of expression may be important for the local protection and inflammatory response.

Its subcellular location is the secreted. The protein localises to the synapse. It localises to the cell projection. It is found in the axon. The protein resides in the dendrite. Its subcellular location is the cell surface. Functionally, precursor of non-enzymatic components of the classical, lectin and GZMK complement pathways, which consist in a cascade of proteins that leads to phagocytosis and breakdown of pathogens and signaling that strengthens the adaptive immune system. Non-enzymatic component of C3 and C5 convertases. Generated following cleavage by complement proteases (C1S, MASP2 or GZMK, depending on the complement pathway), it covalently attaches to the surface of pathogens, where it acts as an opsonin that marks the surface of antigens for removal. It then recruits the serine protease complement C2b to form the C3 and C5 convertases, which cleave and activate C3 and C5, respectively, the next components of the complement pathways. Complement C4b-B isotype catalyzes the transacylation of the thioester carbonyl group to form ester bonds with carbohydrate antigens, while C4b-A isotype is responsible for effective binding to form amide bonds with immune aggregates or protein antigens. Its function is as follows. Putative humoral mediator released following cleavage by complement proteases (C1S, MASP2 or GZMK, depending on the complement pathway). While it is strongly similar to anaphylatoxins, its role is unclear. Was reported to act as a mediator of local inflammatory process; however these effects were probably due to contamination with C3a and/C5a anaphylatoxins in biological assays. In Homo sapiens (Human), this protein is Complement C4-B.